The sequence spans 276 residues: Small ribosomal subunit protein uS3 (276 aa).

A KH type-2 domain is found at 39–110 (IRRETMKFLK…KINIKIKEIK (72 aa)).

Belongs to the universal ribosomal protein uS3 family. Part of the 30S ribosomal subunit. Forms a tight complex with proteins S10 and S14.

In terms of biological role, binds the lower part of the 30S subunit head. Binds mRNA in the 70S ribosome, positioning it for translation. In Borrelia turicatae (strain 91E135), this protein is Small ribosomal subunit protein uS3.